The sequence spans 289 residues: Probable endonuclease 4 (289 aa).

Residues His-75, His-115, Glu-153, Asp-187, His-190, His-224, Asp-237, His-239, and Glu-269 each coordinate Zn(2+).

It belongs to the AP endonuclease 2 family. The cofactor is Zn(2+).

It carries out the reaction Endonucleolytic cleavage to 5'-phosphooligonucleotide end-products.. In terms of biological role, endonuclease IV plays a role in DNA repair. It cleaves phosphodiester bonds at apurinic or apyrimidinic (AP) sites, generating a 3'-hydroxyl group and a 5'-terminal sugar phosphate. In Chlamydia abortus (strain DSM 27085 / S26/3) (Chlamydophila abortus), this protein is Probable endonuclease 4.